Reading from the N-terminus, the 209-residue chain is Large ribosomal subunit protein bL25 (209 aa).

The segment at 190-209 (PDASAAPVAAPAAPAKKGKK) is disordered.

Belongs to the bacterial ribosomal protein bL25 family. CTC subfamily. In terms of assembly, part of the 50S ribosomal subunit; part of the 5S rRNA/L5/L18/L25 subcomplex. Contacts the 5S rRNA. Binds to the 5S rRNA independently of L5 and L18.

In terms of biological role, this is one of the proteins that binds to the 5S RNA in the ribosome where it forms part of the central protuberance. This Delftia acidovorans (strain DSM 14801 / SPH-1) protein is Large ribosomal subunit protein bL25.